A 149-amino-acid chain; its full sequence is ATP synthase epsilon chain (149 aa).

Basic and acidic residues-rich tracts occupy residues 99-116 (DVER…RLEE) and 123-134 (RETHEAARDRAR). Positions 99–149 (DVERAESAEERAKRRLEEGVQEEERETHEAARDRARNRLRVAMGKVGTRQS) are disordered.

It belongs to the ATPase epsilon chain family. As to quaternary structure, F-type ATPases have 2 components, CF(1) - the catalytic core - and CF(0) - the membrane proton channel. CF(1) has five subunits: alpha(3), beta(3), gamma(1), delta(1), epsilon(1). CF(0) has three main subunits: a, b and c.

Its subcellular location is the cell inner membrane. In terms of biological role, produces ATP from ADP in the presence of a proton gradient across the membrane. The protein is ATP synthase epsilon chain of Salinibacter ruber (strain DSM 13855 / M31).